The sequence spans 188 residues: Ion-translocating oxidoreductase complex subunit B (188 aa).

Residues 1–26 (MNGVFLAIGALLPICLAGGALLGYAA) are hydrophobic. One can recognise a 4Fe-4S domain in the interval 32 to 90 (QGDPVAEQVNALLPQTQCGQCGYPGCKPYAEAIAAGDKINKCPPGGEATIRALADLLDL). [4Fe-4S] cluster is bound by residues C49, C52, C57, C73, C113, C116, C119, C123, C143, C146, C149, and C153. 2 4Fe-4S ferredoxin-type domains span residues 104 to 133 (RVAY…GAAR) and 134 to 163 (LMHT…MREI).

It belongs to the 4Fe4S bacterial-type ferredoxin family. RnfB subfamily. The complex is composed of six subunits: RnfA, RnfB, RnfC, RnfD, RnfE and RnfG. It depends on [4Fe-4S] cluster as a cofactor.

The protein resides in the cell inner membrane. Its function is as follows. Part of a membrane-bound complex that couples electron transfer with translocation of ions across the membrane. This is Ion-translocating oxidoreductase complex subunit B from Pseudomonas aeruginosa (strain LESB58).